The chain runs to 585 residues: Glycerol-3-phosphate dehydrogenase (585 aa).

37 to 65 (DVVVIGGGVVGSGCALDAATRGLKVALVE) serves as a coordination point for FAD.

The protein belongs to the FAD-dependent glycerol-3-phosphate dehydrogenase family. The cofactor is FAD.

The protein resides in the cytoplasm. The catalysed reaction is a quinone + sn-glycerol 3-phosphate = dihydroxyacetone phosphate + a quinol. In Mycobacterium leprae (strain TN), this protein is Glycerol-3-phosphate dehydrogenase (glpD).